The primary structure comprises 228 residues: Probable methylthioribulose-1-phosphate dehydratase (228 aa).

C87 provides a ligand contact to substrate. Zn(2+) is bound by residues H105 and H107. E129 serves as the catalytic Proton donor/acceptor. H185 provides a ligand contact to Zn(2+).

This sequence belongs to the aldolase class II family. MtnB subfamily. It depends on Zn(2+) as a cofactor.

It is found in the cytoplasm. It carries out the reaction 5-(methylsulfanyl)-D-ribulose 1-phosphate = 5-methylsulfanyl-2,3-dioxopentyl phosphate + H2O. Its pathway is amino-acid biosynthesis; L-methionine biosynthesis via salvage pathway; L-methionine from S-methyl-5-thio-alpha-D-ribose 1-phosphate: step 2/6. Its function is as follows. Catalyzes the dehydration of methylthioribulose-1-phosphate (MTRu-1-P) into 2,3-diketo-5-methylthiopentyl-1-phosphate (DK-MTP-1-P). The sequence is that of Probable methylthioribulose-1-phosphate dehydratase from Drosophila willistoni (Fruit fly).